The following is a 257-amino-acid chain: Hydroxyacylglutathione hydrolase (257 aa).

Histidine 54, histidine 56, aspartate 58, histidine 59, histidine 113, aspartate 137, and histidine 175 together coordinate Zn(2+).

Belongs to the metallo-beta-lactamase superfamily. Glyoxalase II family. In terms of assembly, monomer. It depends on Zn(2+) as a cofactor.

The enzyme catalyses an S-(2-hydroxyacyl)glutathione + H2O = a 2-hydroxy carboxylate + glutathione + H(+). It participates in secondary metabolite metabolism; methylglyoxal degradation; (R)-lactate from methylglyoxal: step 2/2. Functionally, thiolesterase that catalyzes the hydrolysis of S-D-lactoyl-glutathione to form glutathione and D-lactic acid. This Trichormus variabilis (strain ATCC 29413 / PCC 7937) (Anabaena variabilis) protein is Hydroxyacylglutathione hydrolase.